Reading from the N-terminus, the 89-residue chain is Small ribosomal subunit protein uS15 (89 aa).

This sequence belongs to the universal ribosomal protein uS15 family. Part of the 30S ribosomal subunit. Forms a bridge to the 50S subunit in the 70S ribosome, contacting the 23S rRNA.

In terms of biological role, one of the primary rRNA binding proteins, it binds directly to 16S rRNA where it helps nucleate assembly of the platform of the 30S subunit by binding and bridging several RNA helices of the 16S rRNA. Forms an intersubunit bridge (bridge B4) with the 23S rRNA of the 50S subunit in the ribosome. This chain is Small ribosomal subunit protein uS15, found in Prochlorococcus marinus subsp. pastoris (strain CCMP1986 / NIES-2087 / MED4).